Reading from the N-terminus, the 435-residue chain is Glucoside xylosyltransferase 1 (435 aa).

Over 1–6 (MRRYLR) the chain is Cytoplasmic. Residues 7 to 29 (VVGLCLACGFCSLLYAFSQLAVS) form a helical; Signal-anchor for type II membrane protein membrane-spanning segment. The Lumenal segment spans residues 30-435 (LEEGAAVGRR…NRYDTPPKER (406 aa)). Asparagine 168 and asparagine 232 each carry an N-linked (GlcNAc...) asparagine glycan.

It belongs to the glycosyltransferase 8 family.

It localises to the membrane. It catalyses the reaction 3-O-(beta-D-glucosyl)-L-seryl-[EGF-like domain protein] + UDP-alpha-D-xylose = 3-O-[alpha-D-xylosyl-(1-&gt;3)-beta-D-glucosyl]-L-seryl-[EGF-like domain protein] + UDP + H(+). In terms of biological role, glycosyltransferase which elongates the O-linked glucose attached to EGF-like repeats in the extracellular domain of Notch proteins by catalyzing the addition of xylose. This Rattus norvegicus (Rat) protein is Glucoside xylosyltransferase 1 (Gxylt1).